The chain runs to 240 residues: Ubiquinone biosynthesis O-methyltransferase (240 aa).

S-adenosyl-L-methionine-binding residues include arginine 44, glycine 64, aspartate 85, and methionine 129.

It belongs to the methyltransferase superfamily. UbiG/COQ3 family.

The enzyme catalyses a 3-demethylubiquinol + S-adenosyl-L-methionine = a ubiquinol + S-adenosyl-L-homocysteine + H(+). The catalysed reaction is a 3-(all-trans-polyprenyl)benzene-1,2-diol + S-adenosyl-L-methionine = a 2-methoxy-6-(all-trans-polyprenyl)phenol + S-adenosyl-L-homocysteine + H(+). The protein operates within cofactor biosynthesis; ubiquinone biosynthesis. In terms of biological role, O-methyltransferase that catalyzes the 2 O-methylation steps in the ubiquinone biosynthetic pathway. The polypeptide is Ubiquinone biosynthesis O-methyltransferase (Escherichia coli (strain K12 / MC4100 / BW2952)).